Here is a 177-residue protein sequence, read N- to C-terminus: Meiotic chromosome segregation protein C17A2.07c (177 aa).

Residues 71 to 90 are disordered; the sequence is EDDSINKPTEEADEAPRTQL. Basic and acidic residues predominate over residues 74 to 86; it reads SINKPTEEADEAP.

It is found in the nucleus. Functionally, involved in meiotic chromosome segregation. The polypeptide is Meiotic chromosome segregation protein C17A2.07c (Schizosaccharomyces pombe (strain 972 / ATCC 24843) (Fission yeast)).